The following is a 914-amino-acid chain: Eukaryotic translation initiation factor 3 subunit C-like protein (914 aa).

Residues 1-44 (MSRFFTTGSDSESESSLSGEELVTKPVGGNYGKQPLLLSEDEED) form a disordered region. Low complexity predominate over residues 8–21 (GSDSESESSLSGEE). Phosphoserine is present on residues serine 9, serine 11, serine 13, serine 15, serine 16, serine 18, and serine 39. The residue at position 99 (lysine 99) is an N6-acetyllysine. 2 disordered regions span residues 157-302 (TSYK…GGEW) and 523-543 (QLTPPEGSSKSEQDQAENEGE). A phosphoserine mark is found at serine 166, serine 178, serine 181, and serine 182. The segment covering 166 to 190 (SADEDAEKNEEDSEGSSDEDEDEDG) has biased composition (acidic residues). Residues 199–216 (KKSEAPSGESRKFLKKMD) show a composition bias toward basic and acidic residues. Residues 217-232 (DEDEDSEDSEDDEDWD) are compositionally biased toward acidic residues. A compositionally biased stretch (basic and acidic residues) spans 261–278 (PTTDEDKKAAEKKREDKA). The span at 291–300 (EEEEEDNEGG) shows a compositional bias: acidic residues. Positions 523–532 (QLTPPEGSSK) are enriched in polar residues. Threonine 525 carries the post-translational modification Phosphothreonine. N6-acetyllysine is present on lysine 644. Residues 674 to 850 (FHLHINLELL…QTVVMHRTEP (177 aa)) form the PCI domain. The segment at 886–914 (FRDQKDGYRKNEGYMRRGGYRQQQSQTAY) is disordered. A compositionally biased stretch (basic and acidic residues) spans 887 to 900 (RDQKDGYRKNEGYM). A Phosphoserine modification is found at serine 910.

The protein belongs to the eIF-3 subunit C family. As to quaternary structure, component of the eukaryotic translation initiation factor 3 (eIF-3) complex, which is composed of 13 subunits: EIF3A, EIF3B, EIF3C, EIF3D, EIF3E, EIF3F, EIF3G, EIF3H, EIF3I, EIF3J, EIF3K, EIF3L and EIF3M. The eIF-3 complex appears to include 3 stable modules: module A is composed of EIF3A, EIF3B, EIF3G and EIF3I; module B is composed of EIF3F, EIF3H, and EIF3M; and module C is composed of EIF3C, EIF3D, EIF3E, EIF3K and EIF3L. EIF3C of module C binds EIF3B of module A and EIF3H of module B, thereby linking the three modules. EIF3J is a labile subunit that binds to the eIF-3 complex via EIF3B. The eIF-3 complex interacts with RPS6KB1 under conditions of nutrient depletion. Mitogenic stimulation leads to binding and activation of a complex composed of MTOR and RPTOR, leading to phosphorylation and release of RPS6KB1 and binding of EIF4B to eIF-3. Post-translationally, phosphorylated. Phosphorylation is enhanced upon serum stimulation.

It localises to the cytoplasm. Its function is as follows. Component of the eukaryotic translation initiation factor 3 (eIF-3) complex, which is required for several steps in the initiation of protein synthesis. The eIF-3 complex associates with the 40S ribosome and facilitates the recruitment of eIF-1, eIF-1A, eIF-2:GTP:methionyl-tRNAi and eIF-5 to form the 43S pre-initiation complex (43S PIC). The eIF-3 complex stimulates mRNA recruitment to the 43S PIC and scanning of the mRNA for AUG recognition. The eIF-3 complex is also required for disassembly and recycling of post-termination ribosomal complexes and subsequently prevents premature joining of the 40S and 60S ribosomal subunits prior to initiation. The eIF-3 complex specifically targets and initiates translation of a subset of mRNAs involved in cell proliferation, including cell cycling, differentiation and apoptosis, and uses different modes of RNA stem-loop binding to exert either translational activation or repression. This Homo sapiens (Human) protein is Eukaryotic translation initiation factor 3 subunit C-like protein (EIF3CL).